Reading from the N-terminus, the 384-residue chain is Glucans biosynthesis protein C (384 aa).

Transmembrane regions (helical) follow at residues 17–37, 54–74, 91–111, 140–160, 173–193, 212–232, 240–260, 274–294, 311–331, and 338–358; these read AWLM…THSW, FIHA…SYML, VGIP…ILLQ, LWFL…FTWF, AISL…YAAI, FIVM…LAFI, FTTP…AYLL, TESV…FSLG, ASLF…AYIT, and LIGF…LYEI.

Belongs to the acyltransferase 3 family. OpgC subfamily.

The protein localises to the cell membrane. The protein operates within glycan metabolism; osmoregulated periplasmic glucan (OPG) biosynthesis. Functionally, necessary for the succinyl substitution of periplasmic glucans. Could catalyze the transfer of succinyl residues from the cytoplasmic side of the membrane to the nascent glucan backbones on the periplasmic side of the membrane. In Salmonella agona (strain SL483), this protein is Glucans biosynthesis protein C.